The primary structure comprises 358 residues: ATP synthase gamma chain, chloroplastic (358 aa).

The transit peptide at Met-1 to Ala-35 directs the protein to the chloroplast. The active site involves Cys-123. Cys-233 and Cys-239 are disulfide-bonded.

Belongs to the ATPase gamma chain family. F-type ATPases have 2 components, F(1) - the catalytic core - and F(0) - the membrane proton channel. F(1) has five subunits: alpha(3), beta(3), gamma(1), delta(1), epsilon(1). F(0) has four main subunits: a(1), b(1), b'(1) and c(10-14). The alpha and beta chains form an alternating ring which encloses part of the gamma chain. F(1) is attached to F(0) by a central stalk formed by the gamma and epsilon chains, while a peripheral stalk is formed by the delta, b and b' chains.

It localises to the plastid. The protein resides in the chloroplast thylakoid membrane. In terms of biological role, f(1)F(0) ATP synthase produces ATP from ADP in the presence of a proton or sodium gradient. F-type ATPases consist of two structural domains, F(1) containing the extramembraneous catalytic core and F(0) containing the membrane proton channel, linked together by a central stalk and a peripheral stalk. During catalysis, ATP synthesis in the catalytic domain of F(1) is coupled via a rotary mechanism of the central stalk subunits to proton translocation. Produces ATP from ADP in the presence of a proton gradient across the membrane. The gamma chain is believed to be important in regulating ATPase activity and the flow of protons through the CF(0) complex. This chain is ATP synthase gamma chain, chloroplastic, found in Chlamydomonas reinhardtii (Chlamydomonas smithii).